A 1299-amino-acid chain; its full sequence is Tenascin-N (1299 aa).

Residues 1–28 form the signal peptide; that stretch reads MSLQEMFRFPMGLLLGSVLLVASAPATL. 3 EGF-like domains span residues 167 to 198, 199 to 229, and 230 to 260; these read ERLA…ADCG, YPAC…EDCS, and EKRC…LDCA. Cystine bridges form between Cys-171/Cys-181, Cys-175/Cys-186, Cys-188/Cys-197, Cys-202/Cys-212, Cys-206/Cys-217, Cys-219/Cys-228, Cys-233/Cys-243, Cys-237/Cys-248, and Cys-250/Cys-259. Fibronectin type-III domains are found at residues 264-352, 353-444, 445-532, 533-623, 624-709, 710-800, 801-886, 887-976, and 977-1063; these read TPQG…TDLA, VLGT…TEID, SPTN…TEID, SPAN…IDSP, KNLV…TDID, SPQN…IDSP, QNLV…TEID, GPKN…LDPP, and RNLR…VGAR. Residues 605–624 form a disordered region; sequence GDRESKKADTNAPTDIDSPK. Over residues 960–977 the composition is skewed to basic and acidic residues; sequence QESKKADTKAQTELDPPR. The interval 960–982 is disordered; the sequence is QESKKADTKAQTELDPPRNLRPS. A Fibrinogen C-terminal domain is found at 1061-1278; sequence GARFPHPSDC…YVELKIRPHG (218 aa). Asn-1149 is a glycosylation site (N-linked (GlcNAc...) asparagine).

It belongs to the tenascin family. Homohexamer. As to expression, not detected in normal adult mammary tissues or brain but expressed in most breast tumors and brain tumors, such as glioblastomas, astrocytomas and oligodendrogliomas, tested. In brain tumors, detected around the endothelial cell layer of the clood vessels.

It localises to the secreted. The protein resides in the extracellular space. The protein localises to the extracellular matrix. Extracellular matrix protein that seems to be a ligand for ITGA8:ITGB1, ITGAV:ITGB1 and ITGA4:ITGB1. Involved in neurite outgrowth and cell migration in hippocampal explants. During endochondral bone formation, inhibits proliferation and differentiation of proteoblasts mediated by canonical WNT signaling. In tumors, stimulates angiogenesis by elongation, migration and sprouting of endothelial cells. Expressed in most mammary tumors, may facilitate tumorigenesis by supporting the migratory behavior of breast cancer cells. This is Tenascin-N from Homo sapiens (Human).